The primary structure comprises 149 residues: Transcriptional repressor NrdR (149 aa).

A zinc finger spans residues 3–34 (CPFCSIQETKVIDSRLVADGHQVRRRRECTMC). The ATP-cone domain maps to 49 to 139 (PRVVKRDGSR…VYRSFEDIRE (91 aa)).

It belongs to the NrdR family. Zn(2+) serves as cofactor.

In terms of biological role, negatively regulates transcription of bacterial ribonucleotide reductase nrd genes and operons by binding to NrdR-boxes. In Pseudoalteromonas atlantica (strain T6c / ATCC BAA-1087), this protein is Transcriptional repressor NrdR.